The following is a 306-amino-acid chain: D-alanine--D-alanine ligase (306 aa).

Residues 101–303 (KQVWQAVGLP…FSQLVVKILE (203 aa)) enclose the ATP-grasp domain. 134–189 (FTHLGLPLIVKPSREGSSVGMSKVNTLSDLPAALEEAFRHDDDVLVEKWLSGPEYT) is a binding site for ATP. Mg(2+)-binding residues include Asp257, Glu270, and Asn272.

The protein belongs to the D-alanine--D-alanine ligase family. Requires Mg(2+) as cofactor. The cofactor is Mn(2+).

The protein localises to the cytoplasm. The enzyme catalyses 2 D-alanine + ATP = D-alanyl-D-alanine + ADP + phosphate + H(+). Its pathway is cell wall biogenesis; peptidoglycan biosynthesis. Functionally, cell wall formation. This chain is D-alanine--D-alanine ligase, found in Pectobacterium atrosepticum (strain SCRI 1043 / ATCC BAA-672) (Erwinia carotovora subsp. atroseptica).